We begin with the raw amino-acid sequence, 468 residues long: ATP synthase subunit beta (468 aa).

155–162 (GGAGVGKT) lines the ATP pocket.

Belongs to the ATPase alpha/beta chains family. In terms of assembly, F-type ATPases have 2 components, CF(1) - the catalytic core - and CF(0) - the membrane proton channel. CF(1) has five subunits: alpha(3), beta(3), gamma(1), delta(1), epsilon(1). CF(0) has three main subunits: a(1), b(2) and c(9-12). The alpha and beta chains form an alternating ring which encloses part of the gamma chain. CF(1) is attached to CF(0) by a central stalk formed by the gamma and epsilon chains, while a peripheral stalk is formed by the delta and b chains.

It localises to the cell membrane. It catalyses the reaction ATP + H2O + 4 H(+)(in) = ADP + phosphate + 5 H(+)(out). Its function is as follows. Produces ATP from ADP in the presence of a proton gradient across the membrane. The catalytic sites are hosted primarily by the beta subunits. This Streptococcus thermophilus (strain ATCC BAA-250 / LMG 18311) protein is ATP synthase subunit beta.